We begin with the raw amino-acid sequence, 196 residues long: 3-dehydroquinate dehydratase (196 aa).

3-dehydroquinate contacts are provided by residues 23 to 25 (ELR) and R45. H98 (proton donor/acceptor) is an active-site residue. The Schiff-base intermediate with substrate role is filled by K122. The 3-dehydroquinate site is built by R159 and Q182.

Belongs to the type-I 3-dehydroquinase family. Homodimer.

It catalyses the reaction 3-dehydroquinate = 3-dehydroshikimate + H2O. It participates in metabolic intermediate biosynthesis; chorismate biosynthesis; chorismate from D-erythrose 4-phosphate and phosphoenolpyruvate: step 3/7. Functionally, involved in the third step of the chorismate pathway, which leads to the biosynthesis of aromatic amino acids. Catalyzes the cis-dehydration of 3-dehydroquinate (DHQ) and introduces the first double bond of the aromatic ring to yield 3-dehydroshikimate. The sequence is that of 3-dehydroquinate dehydratase from Archaeoglobus fulgidus (strain ATCC 49558 / DSM 4304 / JCM 9628 / NBRC 100126 / VC-16).